The sequence spans 105 residues: Large ribosomal subunit protein bL21 (105 aa).

Belongs to the bacterial ribosomal protein bL21 family. In terms of assembly, part of the 50S ribosomal subunit. Contacts protein L20.

Its function is as follows. This protein binds to 23S rRNA in the presence of protein L20. The sequence is that of Large ribosomal subunit protein bL21 from Rhizobium etli (strain CIAT 652).